We begin with the raw amino-acid sequence, 533 residues long: AAA-ATPase At5g17740 (533 aa).

Residues 11–27 (ASMFSTYASMMGYVMII) form a helical membrane-spanning segment. 252–259 (GPPGTGKS) is an ATP binding site.

The protein belongs to the AAA ATPase family. BCS1 subfamily. Mg(2+) serves as cofactor.

Its subcellular location is the membrane. It catalyses the reaction ATP + H2O = ADP + phosphate + H(+). The chain is AAA-ATPase At5g17740 from Arabidopsis thaliana (Mouse-ear cress).